A 276-amino-acid polypeptide reads, in one-letter code: Diaminopimelate epimerase (276 aa).

Positions 13, 46, and 66 each coordinate substrate. Cys-75 serves as the catalytic Proton donor. Residues 76–77 (GN), Asn-159, Asn-192, and 210–211 (ER) each bind substrate. Residue Cys-219 is the Proton acceptor of the active site. Position 220 to 221 (220 to 221 (GS)) interacts with substrate.

Belongs to the diaminopimelate epimerase family. Homodimer.

It is found in the cytoplasm. The enzyme catalyses (2S,6S)-2,6-diaminopimelate = meso-2,6-diaminopimelate. It participates in amino-acid biosynthesis; L-lysine biosynthesis via DAP pathway; DL-2,6-diaminopimelate from LL-2,6-diaminopimelate: step 1/1. Catalyzes the stereoinversion of LL-2,6-diaminopimelate (L,L-DAP) to meso-diaminopimelate (meso-DAP), a precursor of L-lysine and an essential component of the bacterial peptidoglycan. This Vibrio vulnificus (strain CMCP6) protein is Diaminopimelate epimerase.